A 259-amino-acid polypeptide reads, in one-letter code: Putative cysteine-rich repeat secretory protein 25 (259 aa).

Residues 1-31 (MSSSFLSRPLVSVYVFAMVTMQLLFMQSVLS) form the signal peptide. 2 Gnk2-homologous domains span residues 37–138 (AYLN…SIYT) and 144–256 (YRHI…LYPF).

The protein belongs to the cysteine-rich repeat secretory protein family.

The protein resides in the secreted. The polypeptide is Putative cysteine-rich repeat secretory protein 25 (CRRSP25) (Arabidopsis thaliana (Mouse-ear cress)).